The primary structure comprises 328 residues: Eukaryotic translation initiation factor 3 subunit I (328 aa).

5 WD repeats span residues 8–47 (GHER…RLGT), 50–91 (GHQG…GTIP), 148–187 (SIQT…ELNS), 190–229 (DHTG…CLKT), and 287–328 (GHFG…FVFE).

This sequence belongs to the eIF-3 subunit I family. Component of the eukaryotic translation initiation factor 3 (eIF-3) complex.

The protein localises to the cytoplasm. Component of the eukaryotic translation initiation factor 3 (eIF-3) complex, which is involved in protein synthesis of a specialized repertoire of mRNAs and, together with other initiation factors, stimulates binding of mRNA and methionyl-tRNAi to the 40S ribosome. The eIF-3 complex specifically targets and initiates translation of a subset of mRNAs involved in cell proliferation. The polypeptide is Eukaryotic translation initiation factor 3 subunit I (Culex quinquefasciatus (Southern house mosquito)).